Reading from the N-terminus, the 259-residue chain is Formate channel BtFdhC (259 aa).

Over 1-26 the chain is Cytoplasmic; that stretch reads MAFHKPEQIAELVIEAGVQKVSQTLP. A helical membrane pass occupies residues 27–47; it reads AMLILGFLGGAFISLGFLLNI. The Periplasmic portion of the chain corresponds to 48-66; it reads RVLGNLPERWGSLVNVLGG. A helical membrane pass occupies residues 67-97; it reads AVFPVGLMLVVLAGGELITGNMMSLSMALYA. Residues 98–108 lie on the Cytoplasmic side of the membrane; the sequence is KKITLVSVLNN. A helical membrane pass occupies residues 109–130; it reads WVWITFMNFVGAIFVAYCFGHL. Over 131-157 the chain is Periplasmic; sequence GGLTEGDYLNKTVAIAEGKLHESFGRT. The helical transmembrane segment at 158 to 176 threads the bilayer; it reads LILAIGCNWLVCLALWLAY. Topologically, residues 177–187 are cytoplasmic; the sequence is GTSDFVGKIIG. A helical transmembrane segment spans residues 188–216; it reads IWIPIMAFVVIGFQQVVANMFVISAVIFA. At 217–227 the chain is on the periplasmic side; the sequence is GHLTWMDLARN. A helical transmembrane segment spans residues 228–250; it reads FVPVFIGNVIGGAGFVGFAYFAC. At 251–259 the chain is on the cytoplasmic side; sequence YQKQHSNMK.

The protein belongs to the FNT transporter (TC 1.A.16) family.

The protein localises to the cell inner membrane. The catalysed reaction is formate(in) = formate(out). Acts as a formate transporter. The sequence is that of Formate channel BtFdhC from Bacillus thuringiensis.